A 508-amino-acid polypeptide reads, in one-letter code: Photosystem II CP47 reaction center protein (508 aa).

Transmembrane regions (helical) follow at residues 21 to 36 (AVHI…WAGS), 101 to 115 (IVFS…IWHW), 140 to 156 (GIHL…FGTF), 203 to 218 (IAAG…FHLS), 237 to 252 (VLSS…AFVV), and 457 to 472 (SFAL…HGAR).

This sequence belongs to the PsbB/PsbC family. PsbB subfamily. As to quaternary structure, PSII is composed of 1 copy each of membrane proteins PsbA, PsbB, PsbC, PsbD, PsbE, PsbF, PsbH, PsbI, PsbJ, PsbK, PsbL, PsbM, PsbT, PsbX, PsbY, PsbZ, Psb30/Ycf12, at least 3 peripheral proteins of the oxygen-evolving complex and a large number of cofactors. It forms dimeric complexes. Binds multiple chlorophylls. PSII binds additional chlorophylls, carotenoids and specific lipids. serves as cofactor.

The protein resides in the plastid. It localises to the chloroplast thylakoid membrane. One of the components of the core complex of photosystem II (PSII). It binds chlorophyll and helps catalyze the primary light-induced photochemical processes of PSII. PSII is a light-driven water:plastoquinone oxidoreductase, using light energy to abstract electrons from H(2)O, generating O(2) and a proton gradient subsequently used for ATP formation. This is Photosystem II CP47 reaction center protein from Citrus sinensis (Sweet orange).